The primary structure comprises 310 residues: ADP-L-glycero-D-manno-heptose-6-epimerase (310 aa).

NADP(+)-binding positions include 10–11 (FI), 31–32 (DN), Lys-38, Lys-53, 75–79 (EGACS), and Asn-92. Catalysis depends on Tyr-140, which acts as the Proton acceptor. An NADP(+)-binding site is contributed by Lys-144. Asn-169 serves as a coordination point for substrate. NADP(+)-binding residues include Val-170 and Lys-178. The Proton acceptor role is filled by Lys-178. Substrate-binding positions include Ser-180, His-187, 201-204 (FAGS), Arg-209, and Tyr-272.

Belongs to the NAD(P)-dependent epimerase/dehydratase family. HldD subfamily. In terms of assembly, homopentamer. NADP(+) serves as cofactor.

It catalyses the reaction ADP-D-glycero-beta-D-manno-heptose = ADP-L-glycero-beta-D-manno-heptose. It participates in nucleotide-sugar biosynthesis; ADP-L-glycero-beta-D-manno-heptose biosynthesis; ADP-L-glycero-beta-D-manno-heptose from D-glycero-beta-D-manno-heptose 7-phosphate: step 4/4. Functionally, catalyzes the interconversion between ADP-D-glycero-beta-D-manno-heptose and ADP-L-glycero-beta-D-manno-heptose via an epimerization at carbon 6 of the heptose. In Yersinia pseudotuberculosis serotype O:1b (strain IP 31758), this protein is ADP-L-glycero-D-manno-heptose-6-epimerase.